The following is a 196-amino-acid chain: Ribosome maturation factor RimM (196 aa).

The 79-residue stretch at 118–196 (QGEYYWRDLI…EMTVDWDPDF (79 aa)) folds into the PRC barrel domain.

This sequence belongs to the RimM family. As to quaternary structure, binds ribosomal protein uS19.

The protein localises to the cytoplasm. In terms of biological role, an accessory protein needed during the final step in the assembly of 30S ribosomal subunit, possibly for assembly of the head region. Essential for efficient processing of 16S rRNA. May be needed both before and after RbfA during the maturation of 16S rRNA. It has affinity for free ribosomal 30S subunits but not for 70S ribosomes. This Alcanivorax borkumensis (strain ATCC 700651 / DSM 11573 / NCIMB 13689 / SK2) protein is Ribosome maturation factor RimM.